Here is a 334-residue protein sequence, read N- to C-terminus: METDIVIIGAGPIGIFTAFQAGMLDMRCHVIDVLDQAGGQCTALYSEKPIYDIPGYPVITAQKLIEQLMEQASPFEPVYHLSQKVEKISNNEGENFTIITNIGTEVKCKAVIIAAGNGMFEPNRPPLSGILEYENKSVFYSVNKISDFQDKTIVIAGGGDSAADWTVELSKVAKKIYVIHRRKEFRCTPETRNKLESLENDGKIELVVPYQLHELAGGNGQLRAVIVKNIASKEEREISADFLLPFFGLSMNLGPINNWGIELEHGRIIVDPATLRTSRDRIYAIGDIATYPDKLKLILNGFAESAMACYHIYKVIHNSPVNFQYSTSKGIHRN.

FAD-binding residues include Asp32, Gln40, Tyr45, Val85, Phe120, Asp287, and Thr327.

Belongs to the ferredoxin--NADP reductase type 2 family. As to quaternary structure, homodimer. The cofactor is FAD.

It catalyses the reaction 2 reduced [2Fe-2S]-[ferredoxin] + NADP(+) + H(+) = 2 oxidized [2Fe-2S]-[ferredoxin] + NADPH. The chain is Ferredoxin--NADP reductase from Wolbachia pipientis subsp. Culex pipiens (strain wPip).